The following is a 304-amino-acid chain: Coenzyme PQQ synthesis protein B (304 aa).

Belongs to the PqqB family.

Its pathway is cofactor biosynthesis; pyrroloquinoline quinone biosynthesis. May be involved in the transport of PQQ or its precursor to the periplasm. In Stutzerimonas stutzeri (Pseudomonas stutzeri), this protein is Coenzyme PQQ synthesis protein B.